We begin with the raw amino-acid sequence, 331 residues long: UDP-glucose 4-epimerase (331 aa).

Residues 11–12, 31–36, 51–52, 73–77, Asn92, Thr117, Tyr141, Lys145, and Phe169 each bind NAD(+); these read YI, DNLITG, DI, and FAAFS. Substrate is bound by residues Thr117 and Tyr141. The active-site Proton acceptor is Tyr141. Residues Asn170, 189 to 190, 206 to 208, Arg221, and 282 to 285 each bind substrate; these read HI, QIY, and RAGD.

The protein belongs to the NAD(P)-dependent epimerase/dehydratase family. In terms of assembly, homodimer. It depends on NAD(+) as a cofactor.

It carries out the reaction UDP-alpha-D-glucose = UDP-alpha-D-galactose. It functions in the pathway carbohydrate metabolism; galactose metabolism. The polypeptide is UDP-glucose 4-epimerase (galE) (Lacticaseibacillus casei (Lactobacillus casei)).